The chain runs to 134 residues: Small ribosomal subunit protein uS8c (134 aa).

This sequence belongs to the universal ribosomal protein uS8 family. In terms of assembly, part of the 30S ribosomal subunit.

It localises to the plastid. Its subcellular location is the chloroplast. In terms of biological role, one of the primary rRNA binding proteins, it binds directly to 16S rRNA central domain where it helps coordinate assembly of the platform of the 30S subunit. This is Small ribosomal subunit protein uS8c (rps8) from Capsella bursa-pastoris (Shepherd's purse).